Reading from the N-terminus, the 445-residue chain is Rab GDP dissociation inhibitor beta (445 aa).

Met1 carries the N-acetylmethionine modification. Lys57 bears the N6-succinyllysine mark. Phosphoserine is present on Ser61. Residue Lys112 is modified to N6-acetyllysine. Ser130 is subject to Phosphoserine. The residue at position 269 (Lys269) is an N6-acetyllysine. Ser382 is modified (phosphoserine).

It belongs to the Rab GDI family. Interacts with RHOH. Interacts with the GDP-bound inactive forms of RAB3A, RAB3B, RAB3C, RAB5A, RAB5B, RAB5C, RAB8A, RAB8B, RAB10, RAB12, RAB35, and RAB43; binds RAB3D to a lesser extent. Interacts with DZIP1; this interaction negatively regulates the interaction of GDI2 with GDP-bound RAB8A. Ubiquitous.

It localises to the cytoplasm. It is found in the membrane. The protein localises to the golgi apparatus. Its subcellular location is the trans-Golgi network. Its function is as follows. GDP-dissociation inhibitor preventing the GDP to GTP exchange of most Rab proteins. By keeping these small GTPases in their inactive GDP-bound form regulates intracellular membrane trafficking. Negatively regulates protein transport to the cilium and ciliogenesis through the inhibition of RAB8A. The protein is Rab GDP dissociation inhibitor beta (GDI2) of Homo sapiens (Human).